A 263-amino-acid chain; its full sequence is HTH-type transcriptional repressor NanR (263 aa).

Residues 1–23 (MSPMNAFDPQAEDSTTTIGRNLR) are disordered. The 69-residue stretch at 30–98 (KKLSEMVEEE…NGERARVSRP (69 aa)) folds into the HTH gntR-type domain. The H-T-H motif DNA-binding region spans 58–77 (ERELMAFFNVGRPSVREALA).

It belongs to the NanR family.

Its function is as follows. Transcriptional repressor that controls expression of the genes required for the catabolism of sialic acids. The chain is HTH-type transcriptional repressor NanR from Escherichia coli O45:K1 (strain S88 / ExPEC).